The sequence spans 269 residues: Microtubule-associated protein RP/EB family member 1 (269 aa).

A Calponin-homology (CH) domain is found at 14-116; it reads NLSRHDMLAW…FVQWFKKFFD (103 aa). The interval 168 to 190 is disordered; sequence RTAVSNKPPAQGISKKPATVGNG. The 71-residue stretch at 186–256 folds into the EB1 C-terminal domain; the sequence is TVGNGDDESA…LYATDEGFVI (71 aa).

The protein belongs to the MAPRE family.

The protein localises to the cytoplasm. It localises to the cytoskeleton. Its subcellular location is the microtubule organizing center. It is found in the centrosome. The protein resides in the golgi apparatus. The protein localises to the spindle. It localises to the spindle pole. Plus-end tracking protein (+TIP) that binds to the plus-end of microtubules and regulates the dynamics of the microtubule cytoskeleton. Promotes cytoplasmic microtubule nucleation and elongation. Involved in mitotic spindle positioning by stabilizing microtubules and promoting dynamic connection between astral microtubules and the cortex during mitotic chromosome segregation. The protein is Microtubule-associated protein RP/EB family member 1 (mapre1) of Xenopus tropicalis (Western clawed frog).